A 115-amino-acid chain; its full sequence is MNNYIRNIENQYKKKNIPSFKSGDSIIVKIWILEGEKKRIQSFEGIVIAKRNRNLNSSFTVRKISNGEGVERKFLIHSPNIHEIKIVRKGLVRKAKLYYLRSRIGKSARIKESLK.

This sequence belongs to the bacterial ribosomal protein bL19 family.

Functionally, this protein is located at the 30S-50S ribosomal subunit interface and may play a role in the structure and function of the aminoacyl-tRNA binding site. The chain is Large ribosomal subunit protein bL19 from Buchnera aphidicola subsp. Cinara cedri (strain Cc).